The chain runs to 189 residues: Elongation factor P (189 aa).

The protein belongs to the elongation factor P family.

It localises to the cytoplasm. It participates in protein biosynthesis; polypeptide chain elongation. In terms of biological role, involved in peptide bond synthesis. Stimulates efficient translation and peptide-bond synthesis on native or reconstituted 70S ribosomes in vitro. Probably functions indirectly by altering the affinity of the ribosome for aminoacyl-tRNA, thus increasing their reactivity as acceptors for peptidyl transferase. The polypeptide is Elongation factor P (Chloroflexus aurantiacus (strain ATCC 29364 / DSM 637 / Y-400-fl)).